An 892-amino-acid chain; its full sequence is MGTQTAAASDIAQHTPMMQQYLRIKGEHPGTLVFYRMGDFYELFFDDAEKAARLLDLTLTQRGASGGNPIKMAGVPHHAVEQYLAKLVKLGESVAICEQIGDPATSKGPVERKVVRVVTPGTLTDAALLSDKSDTYLLAACAGHNRRGVVTTVGLAWLNLASGALRLAEVAPDQVAAALERIRPAEILVADAPSSSDANAWSVPTGFGATTRVPLWHFDVASGTQRLCDQLEVAGLDGFGAHSLTCACGAAGALLLYAAATQGQQLRHVRSLKVEYESEYIGLDPSTRRNLELTETLRGTDSPTLCSLLDTCCTTMGSRLLRHWLHHPPRDASFAQARQQAIGALLDSPPQASLDALCGALRQISDIERITGRLALLSARPRDLSSLRDTFIALPELRAQLVPLTGAADSLARIHASLEPPADCVDLLTRAVAQEPAAMIRDGGVIARGYDVDLDELRDISENCGQFLIDLETRERARTGIGNLRVEYNKVHGFYIEVTRGQTDKVPDDYRRRQTLKNAERYITPELKTFEDKALSAQERALAREKALYDALLQSLLPFIADCQRVASALAELDLLAAFAERARALDWVAPNFSATGGIDIEQGRHPVVEAQVEQFIANDCMLNPERKLLLITGPNMGGKSTFMRQTALIALMAYVGSYVPARRASFGPIDRIFTRIGAADDLAGGRSTFMVEMTEAAAILNDATPQSLVLMDEIGRGTSTFDGLALAWAIARHLLAHNGCHTLFATHYFELTQLPAEFPHAANVHLSAVEHGHGIVFLHAVNEGPANQSYGLQVAQLAGVPNAVIRAARKHLAYLEQQSAGAPAPQLDLFSAPVAMLEDADDESIAPALDAATRTLVERLRDIDPNDLRPRDALDLLYELHELAKSPDAPR.

634–641 (GPNMGGKS) contributes to the ATP binding site.

Belongs to the DNA mismatch repair MutS family.

In terms of biological role, this protein is involved in the repair of mismatches in DNA. It is possible that it carries out the mismatch recognition step. This protein has a weak ATPase activity. This chain is DNA mismatch repair protein MutS, found in Paraburkholderia phymatum (strain DSM 17167 / CIP 108236 / LMG 21445 / STM815) (Burkholderia phymatum).